A 336-amino-acid polypeptide reads, in one-letter code: MELHILFFILAGLLIAVLIGFSLWSARREKSRIFSNTFSTRPPSTPINNIVSDVPPSLNPQSYAQTTGQHGETEADNPVQIQQEVESSLREIKINLPGQDSAAYQSKVEETPIYSGQPVLPVQPQYQTQVQYQTQPQHIEPAFTQAPQSPIAEATSVLEQSVEELERQAAQGDVDIYSDASVRVELAKNSMQADSVAEQKPVAENNMITLYVVAPEGQQFRGDYVVQSLEALGFQYGEYQIFHRHQHMGNSASPVIFSVANMMQPGIFDLTKIEHFSTVGLVLFMHLPSEGNDVVNFKLLLKTTENLAQALGGFVLNEHREIFDENSRQSYLARVS.

Residues methionine 1–glutamate 2 are Periplasmic-facing. Residues leucine 3–leucine 23 form a helical membrane-spanning segment. Residues tryptophan 24–serine 336 are Cytoplasmic-facing. Positions serine 57–aspartate 76 are disordered. A compositionally biased stretch (polar residues) spans asparagine 59–histidine 70.

This sequence belongs to the ZipA family. Interacts with FtsZ via their C-terminal domains.

It is found in the cell inner membrane. Its function is as follows. Essential cell division protein that stabilizes the FtsZ protofilaments by cross-linking them and that serves as a cytoplasmic membrane anchor for the Z ring. Also required for the recruitment to the septal ring of downstream cell division proteins. This is Cell division protein ZipA from Actinobacillus pleuropneumoniae serotype 7 (strain AP76).